The primary structure comprises 111 residues: Rubredoxin (111 aa).

Residues 11-62 enclose the Rubredoxin-like domain; it reads LDRFECRSCGYVYEPEKGDSKHDIAPETPFAELPINWRCPVCTAKKAAFSNI. Fe cation contacts are provided by cysteine 16, cysteine 19, cysteine 49, and cysteine 52.

It belongs to the rubredoxin family. It depends on Fe(3+) as a cofactor.

Its function is as follows. Rubredoxin is a small nonheme, iron protein lacking acid-labile sulfide. Its single Fe, chelated to 4 Cys, functions as an electron acceptor and may also stabilize the conformation of the molecule. Could be involved in hydrogenase-linked redox processes. The chain is Rubredoxin (rub) from Trichormus variabilis (strain ATCC 29413 / PCC 7937) (Anabaena variabilis).